A 183-amino-acid chain; its full sequence is GMP synthase [glutamine-hydrolyzing] subunit A (183 aa).

One can recognise a Glutamine amidotransferase type-1 domain in the interval His-3–Glu-183. Cys-74 serves as the catalytic Nucleophile. Residues His-162 and Glu-164 contribute to the active site.

In terms of assembly, heterodimer composed of a glutamine amidotransferase subunit (A) and a GMP-binding subunit (B).

The catalysed reaction is XMP + L-glutamine + ATP + H2O = GMP + L-glutamate + AMP + diphosphate + 2 H(+). The protein operates within purine metabolism; GMP biosynthesis; GMP from XMP (L-Gln route): step 1/1. Catalyzes the synthesis of GMP from XMP. This Halobacterium salinarum (strain ATCC 700922 / JCM 11081 / NRC-1) (Halobacterium halobium) protein is GMP synthase [glutamine-hydrolyzing] subunit A.